We begin with the raw amino-acid sequence, 251 residues long: Probable metal-binding protein YrpE (251 aa).

The first 30 residues, 1–30 (MNILFSKRLGILTIGSLLVLAGCQTSGSSA), serve as a signal peptide directing secretion. Residues 25-41 (TSGSSAGESNQTTSSSA) show a composition bias toward polar residues. The disordered stretch occupies residues 25 to 72 (TSGSSAGESNQTTSSSAVEEDSSKTQEQTSDSHTHEHSHDHSHAHDEE). Residues 54–72 (SDSHTHEHSHDHSHAHDEE) show a composition bias toward basic and acidic residues. His203, His212, His214, Glu247, and His251 together coordinate Zn(2+).

This sequence belongs to the calycin superfamily. ZinT family.

This chain is Probable metal-binding protein YrpE (yrpE), found in Bacillus subtilis (strain 168).